A 333-amino-acid polypeptide reads, in one-letter code: Transcription initiation factor IIB (333 aa).

A TFIIB-type zinc finger spans residues 33-64 (EVYRCPICGNDRFVYNYERGEIVCIVCGAVVQ). Zn(2+) contacts are provided by cysteine 37, cysteine 40, cysteine 56, and cysteine 59. 2 consecutive repeat copies span residues 149 to 232 (QELE…LREL) and 243 to 324 (LYIS…ELAK).

The protein belongs to the TFIIB family.

Stabilizes TBP binding to an archaeal box-A promoter. Also responsible for recruiting RNA polymerase II to the pre-initiation complex (DNA-TBP-TFIIB). This Pyrobaculum islandicum (strain DSM 4184 / JCM 9189 / GEO3) protein is Transcription initiation factor IIB.